The primary structure comprises 462 residues: Glutamate--tRNA ligase 2 (462 aa).

The 'HIGH' region motif lies at 8–18; the sequence is PSPTGYLHIGG. Residues 236–240 carry the 'KMSKS' region motif; that stretch reads KLSKR. ATP is bound at residue K239.

Belongs to the class-I aminoacyl-tRNA synthetase family. Glutamate--tRNA ligase type 1 subfamily. Monomer.

It localises to the cytoplasm. The catalysed reaction is tRNA(Glu) + L-glutamate + ATP = L-glutamyl-tRNA(Glu) + AMP + diphosphate. Catalyzes the attachment of glutamate to tRNA(Glu) in a two-step reaction: glutamate is first activated by ATP to form Glu-AMP and then transferred to the acceptor end of tRNA(Glu). This chain is Glutamate--tRNA ligase 2, found in Nitratiruptor sp. (strain SB155-2).